Here is a 369-residue protein sequence, read N- to C-terminus: Trans-enoyl reductase pyiC (369 aa).

NADP(+) is bound at residue 52–55 (CDYK). Residue 137 to 144 (TGIGTLGM) coordinates substrate. Residues 195-198 (SPKN), Tyr213, and 260-261 (LE) each bind NADP(+). Residue 280-284 (GPLLL) coordinates substrate. Residue 349-350 (VS) coordinates NADP(+).

This sequence belongs to the zinc-containing alcohol dehydrogenase family. As to quaternary structure, monomer.

It functions in the pathway mycotoxin biosynthesis. Its function is as follows. Trans-enoyl reductase; part of the gene cluster that mediates the biosynthesis of the mycotoxin pyrichalasin H, a tyrosine-derived cytochalasan that inhibits the growth of rice seedlings, but also inhibits lymphocyte capping and actin polymerization and alters cell morphology. Pyrichalasin H is indicated as the responsible agent for the genus-specific pathogenicity of M.grisea toward crabgrass. The first step in the pathway is catalyzed by the O-methyltransferase pyiA which methylates free tyrosine to generate the precursor O-methyltyrosine. The hybrid PKS-NRPS pyiS, assisted by the enoyl reductase pyiC, are responsible for fusion of the O-methyltyrosine precursor and the polyketide backbone. The polyketide synthase module (PKS) of pyiS is responsible for the synthesis of the polyketide backbone and the downstream nonribosomal peptide synthetase (NRPS) amidates the carboxyl end of the polyketide with the O-methyltyrosine precursor. As the NRPS A-domain demonstrates substrate tolerance, pyiS can also use phenylalanine, tyrosine and even para-chlorophenylalanine as amino acid precursor, which leads to the production of novel cytochalasans, including halogenated cytochalasans. Because pyiS lacks a designated enoylreductase (ER) domain, the required activity is provided the enoyl reductase pyiC. Reduction by the hydrolyase pyiE, followed by dehydration and intra-molecular Diels-Alder cyclization by the Diels-Alderase pyiF then yield the required isoindolone-fused macrocycle. The tailoring cytochrome P450 monooxygenases piyD and piyG catalyze the hydroxylation at C-18 and C-7, respectivily, whereas the short-chain dehydrogenase/reductase pyiH reduces the carbonyl at C-21 in preparation for the transfer of an acetyl group by the acetyltransferase pyiB. These 3 reactions whose order is not clear yet, lead to the production of O-methylpyrichalasin J, a deacetylated pyrichalasin H. Finally, pyiB to converts O-methylpyrichalasin J into the final product pyrichalasin H via acetylation of C-21. This is Trans-enoyl reductase pyiC from Pyricularia grisea (Crabgrass-specific blast fungus).